A 185-amino-acid polypeptide reads, in one-letter code: Ribosome-recycling factor (185 aa).

This sequence belongs to the RRF family.

It localises to the cytoplasm. In terms of biological role, responsible for the release of ribosomes from messenger RNA at the termination of protein biosynthesis. May increase the efficiency of translation by recycling ribosomes from one round of translation to another. The sequence is that of Ribosome-recycling factor from Thermus thermophilus (strain ATCC BAA-163 / DSM 7039 / HB27).